A 74-amino-acid polypeptide reads, in one-letter code: MVKNYSFYQFIMTVRGRKDDKGVFAEQIFEDLAFPKHEDDFNTLSEYIETHSEFTLPMSVFDDLYDDYTEWLKF.

The protein belongs to the UPF0346 family.

The sequence is that of UPF0346 protein SE_1114 from Staphylococcus epidermidis (strain ATCC 12228 / FDA PCI 1200).